A 596-amino-acid polypeptide reads, in one-letter code: UvrABC system protein C (596 aa).

One can recognise a GIY-YIG domain in the interval 14–91; it reads QQPGCYLMKD…IKKYDPRYNV (78 aa). The UVR domain occupies 196–231; sequence KDIRKNLAGEMQKASEALNFERAKEIRDTIQHIDAT.

The protein belongs to the UvrC family. As to quaternary structure, interacts with UvrB in an incision complex.

Its subcellular location is the cytoplasm. Functionally, the UvrABC repair system catalyzes the recognition and processing of DNA lesions. UvrC both incises the 5' and 3' sides of the lesion. The N-terminal half is responsible for the 3' incision and the C-terminal half is responsible for the 5' incision. The polypeptide is UvrABC system protein C (Oceanobacillus iheyensis (strain DSM 14371 / CIP 107618 / JCM 11309 / KCTC 3954 / HTE831)).